The chain runs to 377 residues: Opsin-2 (377 aa).

At 1–57 (MNNQSENYYHGAQFEALKSAGAIEMLGDGLTGDDLAAIPEHWLSYPAPPASAHTALA) the chain is on the extracellular side. Residue Asn3 is glycosylated (N-linked (GlcNAc...) asparagine). Residues 58-78 (LLYIFFTFAALVGNGMVIFIF) form a helical membrane-spanning segment. Topologically, residues 79–89 (STTKSLRTSSN) are cytoplasmic. A helical transmembrane segment spans residues 90–110 (FLVLNLAILDFIMMAKAPIFI). Over 111–126 (YNSAMRGFAVGTVGCQ) the chain is Extracellular. A disulfide bond links Cys125 and Cys202. A helical membrane pass occupies residues 127 to 146 (IFALMGAYSGIGAGMTNACI). Topologically, residues 147 to 166 (AYDRHSTITRPLDGRLSEGK) are cytoplasmic. Residues 167-187 (VLLMVAFVWIYSTPWALLPLL) form a helical membrane-spanning segment. Residues 188–214 (KIWGRYVPEGYLTSCSFDYLTNTFDTK) are Extracellular-facing. A helical membrane pass occupies residues 215–235 (LFVACIFTCSYVFPMSLIIYF). The Cytoplasmic segment spans residues 236–283 (YSGIVKQVFAHEAALREQAKKMNVESLRANQGGSSESAEIRIAKAALT). Residues 284-304 (VCFLFVASWTPYGVMALIGAF) traverse the membrane as a helical segment. Topologically, residues 305–314 (GNQQLLTPGV) are extracellular. The helical transmembrane segment at 315–335 (TMIPAVACKAVACISPWVYAI) threads the bilayer. The Cytoplasmic segment spans residues 336–377 (RHPMYRQELQRRMPWLQIDEPDDTVSTATSNTTNSAPPAATA). The disordered stretch occupies residues 355–377 (EPDDTVSTATSNTTNSAPPAATA). Over residues 361-377 (STATSNTTNSAPPAATA) the composition is skewed to low complexity.

This sequence belongs to the G-protein coupled receptor 1 family. Opsin subfamily. As to expression, in the retina, expression is essentially uniformly distributed, but a higher level is seen in the dorsal region of the retina and in the dorsal rim retinulae.

The protein localises to the membrane. Its function is as follows. Visual pigments are the light-absorbing molecules that mediate vision. They consist of an apoprotein, opsin, covalently linked to cis-retinal. May play a role in photoperiodic photoreception. This chain is Opsin-2 (OP2), found in Manduca sexta (Tobacco hawkmoth).